The sequence spans 92 residues: RQC P-site tRNA stabilizing factor (92 aa).

One can recognise an S4 RNA-binding domain in the interval 5-65 (MRLDKYLKVS…GPKIVTAKIE (61 aa)).

The protein belongs to the RqcP family. As to quaternary structure, associates with stalled 50S ribosomal subunits. Binds to RqcH, 23S rRNA and the P-site tRNA. Does not require RqcH for association with 50S subunits.

In terms of biological role, key component of the ribosome quality control system (RQC), a ribosome-associated complex that mediates the extraction of incompletely synthesized nascent chains from stalled ribosomes and their subsequent degradation. RqcH recruits Ala-charged tRNA, and with RqcP directs the elongation of stalled nascent chains on 50S ribosomal subunits, leading to non-templated C-terminal alanine extensions (Ala tail). The Ala tail promotes nascent chain degradation. RqcP is associated with the translocation-like movement of the peptidyl-tRNA from the A-site into the P-site. This is RQC P-site tRNA stabilizing factor from Listeria innocua serovar 6a (strain ATCC BAA-680 / CLIP 11262).